A 166-amino-acid polypeptide reads, in one-letter code: Anaerobic nitrite reductase NSHB1 (166 aa).

In terms of domain architecture, Globin spans 13-163 (SFSEEQEALV…LVAAIKQEMK (151 aa)). A Homodimerization motif is present at residues 46 to 50 (EVAPS). The heme b site is built by Ser-56, Lys-70, His-74, Arg-104, Thr-108, and His-109. The Homodimerization motif lies at 116–128 (DAHFEVVKFALLD).

This sequence belongs to the plant globin family. As to quaternary structure, homodimer. The cofactor is heme b. In terms of tissue distribution, expressed in coleoptiles, embryos, leaves, seminal roots and roots.

The protein localises to the cytoplasm. Its subcellular location is the nucleus. It catalyses the reaction Fe(III)-heme b-[protein] + nitric oxide + H2O = Fe(II)-heme b-[protein] + nitrite + 2 H(+). Its activity is regulated as follows. Slowly reduced by ascorbic acid (AA); this reaction may become a source of nitric oxide (NO) during hypoxia. Functionally, phytoglobin that reduces nitrite to nitric oxide under anoxic conditions (e.g. during flooding or in waterlogged soil). May not function as an oxygen storage or transport protein. Has an unusually high affinity for O(2) through a hexacoordinate heme iron because of a very low dissociation constant. In Oryza sativa subsp. japonica (Rice), this protein is Anaerobic nitrite reductase NSHB1.